The following is a 225-amino-acid chain: Large ribosomal subunit protein bL25 (225 aa).

Residues 197–225 (PQREEQMEDTDTAAADEEGDKEEDADKQE) form a disordered region. The span at 202-225 (QMEDTDTAAADEEGDKEEDADKQE) shows a compositional bias: acidic residues.

The protein belongs to the bacterial ribosomal protein bL25 family. CTC subfamily. As to quaternary structure, part of the 50S ribosomal subunit; part of the 5S rRNA/L5/L18/L25 subcomplex. Contacts the 5S rRNA. Binds to the 5S rRNA independently of L5 and L18.

Its function is as follows. This is one of the proteins that binds to the 5S RNA in the ribosome where it forms part of the central protuberance. This Dichelobacter nodosus (strain VCS1703A) protein is Large ribosomal subunit protein bL25.